Consider the following 142-residue polypeptide: Small heat shock protein IbpB (142 aa).

The sHSP domain maps to 26-137 (AGEGQSFPPY…AAQRIAISER (112 aa)).

Belongs to the small heat shock protein (HSP20) family. As to quaternary structure, homodimer. Forms homomultimers of about 100-150 subunits at optimal growth temperatures. Conformation changes to oligomers at high temperatures or high ionic concentrations. The decrease in size of the multimers is accompanied by an increase in chaperone activity.

It is found in the cytoplasm. Functionally, associates with aggregated proteins, together with IbpA, to stabilize and protect them from irreversible denaturation and extensive proteolysis during heat shock and oxidative stress. Aggregated proteins bound to the IbpAB complex are more efficiently refolded and reactivated by the ATP-dependent chaperone systems ClpB and DnaK/DnaJ/GrpE. Its activity is ATP-independent. This Shigella boydii serotype 18 (strain CDC 3083-94 / BS512) protein is Small heat shock protein IbpB.